Consider the following 256-residue polypeptide: Small ribosomal subunit protein eS1 (256 aa).

Over residues 1–18 (MAVGKNKRLSKGKKGLKK) the composition is skewed to basic residues. The interval 1-22 (MAVGKNKRLSKGKKGLKKKTQD) is disordered. A2 carries the post-translational modification N-acetylalanine; partial.

The protein belongs to the eukaryotic ribosomal protein eS1 family. Component of the small ribosomal subunit. Mature ribosomes consist of a small (40S) and a large (60S) subunit. The 40S subunit contains about 33 different proteins and 1 molecule of RNA (18S). The 60S subunit contains about 49 different proteins and 3 molecules of RNA (25S, 5.8S and 5S).

Its subcellular location is the cytoplasm. The protein is Small ribosomal subunit protein eS1 of Pyricularia oryzae (strain Y34) (Rice blast fungus).